A 230-amino-acid chain; its full sequence is Somatolactin (230 aa).

Residues 1-23 (MNMMTVKQGVWAALLWPYLLAAS) form the signal peptide. Disulfide bonds link Cys28–Cys38, Cys88–Cys204, and Cys221–Cys229. Asn137 and Asn144 each carry an N-linked (GlcNAc...) asparagine glycan.

It belongs to the somatotropin/prolactin family.

The protein resides in the secreted. This is Somatolactin from Hippoglossus hippoglossus (Atlantic halibut).